The sequence spans 173 residues: Mitochondrial import inner membrane translocase subunit TIM22-1 (173 aa).

The N-terminal 18 residues, 1–18 (MADSSAAEPTTGASSPPV), are a transit peptide targeting the mitochondrion. A disordered region spans residues 1–26 (MADSSAAEPTTGASSPPVASDENSTQ). The next 4 helical transmembrane spans lie at 52–72 (VTSGVMGGGLGLMMGLFLGAL), 101–119 (SCKTFAVMGLVFSAAECIV), 128–144 (TVNTAIAGCVTGGSMSA), and 151–168 (ACIGCAGFATFSVLIEKF).

Belongs to the Tim17/Tim22/Tim23 family. In terms of tissue distribution, expressed in young cotyledons, roots, flowers and leaves.

It is found in the mitochondrion inner membrane. In terms of biological role, essential core component of the TIM22 complex, a complex that mediates the import and insertion of multi-pass transmembrane proteins into the mitochondrial inner membrane. The sequence is that of Mitochondrial import inner membrane translocase subunit TIM22-1 (TIM22-1) from Arabidopsis thaliana (Mouse-ear cress).